The following is a 129-amino-acid chain: Phosphoribosyl-AMP cyclohydrolase (129 aa).

Asp-76 is a binding site for Mg(2+). Cys-77 is a Zn(2+) binding site. Mg(2+) contacts are provided by Asp-78 and Asp-80. Zn(2+)-binding residues include Cys-97 and Cys-104.

Belongs to the PRA-CH family. In terms of assembly, homodimer. Mg(2+) serves as cofactor. It depends on Zn(2+) as a cofactor.

Its subcellular location is the cytoplasm. It catalyses the reaction 1-(5-phospho-beta-D-ribosyl)-5'-AMP + H2O = 1-(5-phospho-beta-D-ribosyl)-5-[(5-phospho-beta-D-ribosylamino)methylideneamino]imidazole-4-carboxamide. It participates in amino-acid biosynthesis; L-histidine biosynthesis; L-histidine from 5-phospho-alpha-D-ribose 1-diphosphate: step 3/9. In terms of biological role, catalyzes the hydrolysis of the adenine ring of phosphoribosyl-AMP. In Polaromonas sp. (strain JS666 / ATCC BAA-500), this protein is Phosphoribosyl-AMP cyclohydrolase.